Reading from the N-terminus, the 502-residue chain is MEDIIIGVVALAAVLLFFLYQKPKTKRYKLPPGPSPLPVIGNLLQLQKLNPQRFFAGWAKKYGPILSYRIGSRTMVVISSAELAKELLKTQDVNFADRPPHRGHEFISYGRRDMALNHYTPYYREIRKMGMNHLFSPTRVATFKHVREEEARRMMDKINKAADKSEVVDISELMLTFTNSVVCRQAFGKKYNEDGEEMKRFIKILYGTQSVLGKIFFSDFFPYCGFLDDLSGLTAYMKECFERQDTYIQEVVNETLDPKRVKPETESMIDLLMGIYKEQPFASEFTVDNVKAVILDIVVAGTDTAAAAVVWGMTYLMKYPQVLKKAQAEVREYMKEKGSTFVTEDDVKNLPYFRALVKETLRIEPVIPLLIPRACIQDTKIAGYDIPAGTTVNVNAWAVSRDEKEWGPNPDEFRPERFLEKEVDFKGTDYEFIPFGSGRRMCPGMRLGAAMLEVPYANLLLSFNFKLPNGMKPDDINMDVMTGLAMHKSQHLKLVPEKVNKY.

The chain crosses the membrane as a helical span at residues 1 to 21 (MEDIIIGVVALAAVLLFFLYQ). Cysteine 442 provides a ligand contact to heme.

The protein belongs to the cytochrome P450 family. Heme serves as cofactor.

The protein resides in the endoplasmic reticulum membrane. It carries out the reaction an (E)-omega-(methylsulfanyl)-alkanal oxime + glutathione + reduced [NADPH--hemoprotein reductase] + O2 = an S-[(1E)-1-(hydroxyimino)-omega-(methylsulfanyl)alkyl]-L-glutathione + oxidized [NADPH--hemoprotein reductase] + 2 H2O + H(+). Its function is as follows. Involved in the metabolism of aliphatic and aromatic oximes. Involved in the biosynthesis of both short-chain and long-chain aliphatic glucosinolates. This is Cytochrome P450 83A1 (CYP83A1) from Arabidopsis thaliana (Mouse-ear cress).